The sequence spans 712 residues: Golgin candidate 3 (712 aa).

The disordered stretch occupies residues 23–49 (DEEEDDLHKYGSANGVSNSDRRNSSGF). A compositionally biased stretch (polar residues) spans 36–49 (NGVSNSDRRNSSGF). Residues 65–134 (AHHEIERYKA…LKEARTDISR (70 aa)) adopt a coiled-coil conformation. The segment covering 135 to 150 (GSNNYAIKGNNDQSPN) has biased composition (polar residues). Disordered stretches follow at residues 135-176 (GSNN…TDSF) and 306-347 (ESRK…MEQS). Coiled-coil stretches lie at residues 197-313 (QATE…LTNS), 340-558 (GKEE…LNRM), and 659-690 (LKDA…QEAA). Positions 328–344 (STLDKEKPESFPGKEEM) are enriched in basic and acidic residues. Residues 557–608 (RMSMESDYLVDRRIVIKLLVTYFQKNHNKEVLDLMVRMLGFSEEDKERIGAA) form the GRIP domain. The interval 666–712 (ERREAEEAAASKAKQDSERTRQEAALHDSEFSTVPLRSSESNQRLSR) is disordered. Residues 678–695 (AKQDSERTRQEAALHDSE) are compositionally biased toward basic and acidic residues. Residues 696–712 (FSTVPLRSSESNQRLSR) show a composition bias toward polar residues.

In terms of assembly, interacts with ARF1; preferentially with the active form of the protein.

It localises to the golgi apparatus. It is found in the endosome. Functionally, golgi matrix protein playing a role in tethering of vesicles to Golgi membranes and in maintaining the overall structure of the Golgi apparatus. This chain is Golgin candidate 3 (GC3), found in Arabidopsis thaliana (Mouse-ear cress).